The sequence spans 31 residues: Ice-structuring glycoprotein 3 (31 aa).

Residues Thr3, Thr6, Thr9, Thr12, Thr15, Thr18, Thr21, Thr24, Thr27, and Thr30 are each glycosylated (O-linked (GalNAc...) threonine).

In terms of processing, O-linked glycans consist of Gal-GalNAc disaccharides. The three proteins may differ only in the number of repeating units of -Ala-Ala-Thr-.

The protein resides in the secreted. In terms of biological role, antifreeze proteins lower the blood freezing point. This fish lives in antarctic waters where it experiences water temperatures near -1.9 degrees Celsius. Its blood has a freezing point of about -2.0 degrees Celsius, and 30% of the freezing-point depression is due mainly to the 3 major high molecular weight glycoproteins in the plasma. This chain is Ice-structuring glycoprotein 3, found in Pagothenia borchgrevinki (Bald rockcod).